Consider the following 310-residue polypeptide: MSEDAVKNAILIAGPTASGKSALAIRMAKATGGFIVNTDSMQVYGVLDLLTARPSRANLAEAEHFLYGHVPPSSTYSTGKWFEDVEALLGRCELQGRVPIFVGGTGLYFRALLGGLSQTPEVSAQVRDHWRGRMEAEGAKALHAVLCVRDPAIAAALQPSDSQRIVRALEVLESTGKSLLEWQKVKGRALVDDQSAQKIVLRPDRAWLGERIARRFSAMWAEGAIDEVRALLALDLDPALPAMKAIGVREVSAFLAETMSREEAIERSVIATRQYAKRQSTWFRNQLGEDWRVYASGEEVFQGGSFRDPQ.

14–21 contributes to the ATP binding site; it reads GPTASGKS. 16–21 serves as a coordination point for substrate; it reads TASGKS. 2 interaction with substrate tRNA regions span residues 39–42 and 163–167; these read DSMQ and QRIVR.

The protein belongs to the IPP transferase family. As to quaternary structure, monomer. It depends on Mg(2+) as a cofactor.

The catalysed reaction is adenosine(37) in tRNA + dimethylallyl diphosphate = N(6)-dimethylallyladenosine(37) in tRNA + diphosphate. Functionally, catalyzes the transfer of a dimethylallyl group onto the adenine at position 37 in tRNAs that read codons beginning with uridine, leading to the formation of N6-(dimethylallyl)adenosine (i(6)A). The sequence is that of tRNA dimethylallyltransferase from Brucella melitensis biotype 2 (strain ATCC 23457).